The chain runs to 860 residues: Leucine--tRNA ligase (860 aa).

The short motif at 42 to 52 is the 'HIGH' region element; sequence PYPSGRLHMGH. The 'KMSKS' region motif lies at 619-623; that stretch reads KMSKS. ATP is bound at residue lysine 622.

It belongs to the class-I aminoacyl-tRNA synthetase family.

The protein localises to the cytoplasm. It carries out the reaction tRNA(Leu) + L-leucine + ATP = L-leucyl-tRNA(Leu) + AMP + diphosphate. This is Leucine--tRNA ligase from Erwinia tasmaniensis (strain DSM 17950 / CFBP 7177 / CIP 109463 / NCPPB 4357 / Et1/99).